Consider the following 152-residue polypeptide: Ubiquitin-conjugating enzyme E2 2 (152 aa).

The UBC core domain occupies 4–150 (PARKRLMRDF…VREVVEQSWT (147 aa)). The active-site Glycyl thioester intermediate is the cysteine 88.

This sequence belongs to the ubiquitin-conjugating enzyme family. Expressed in all tissues examined. Lower levels found in leaves.

It carries out the reaction S-ubiquitinyl-[E1 ubiquitin-activating enzyme]-L-cysteine + [E2 ubiquitin-conjugating enzyme]-L-cysteine = [E1 ubiquitin-activating enzyme]-L-cysteine + S-ubiquitinyl-[E2 ubiquitin-conjugating enzyme]-L-cysteine.. It participates in protein modification; protein ubiquitination. Its function is as follows. Accepts the ubiquitin from the E1 complex and catalyzes its covalent attachment to other proteins. This chain is Ubiquitin-conjugating enzyme E2 2 (UBC2), found in Arabidopsis thaliana (Mouse-ear cress).